Reading from the N-terminus, the 158-residue chain is uncharacterized protein (158 aa).

The HTH hxlR-type domain maps to 13–110 (ESVGRALELV…WGDEYLPRPE (98 aa)).

This is an uncharacterized protein from Mycobacterium tuberculosis (strain ATCC 25618 / H37Rv).